Consider the following 256-residue polypeptide: Protein YABBY 4 (256 aa).

The C4-type zinc finger occupies 30-57 (CNCCDTILAVGVPCSSLFKTVTVRCGHC). Residues 127–168 (SCASNAPAMQMPPAKPVQQEPELPKNAPASANRPPEKRQRVP) are disordered.

Belongs to the YABBY family. As to expression, preferentially expressed in immature organs containing meristems and organ primordia. Expressed in phloem of developing vascular tissues of young seedling shoots. Expressed in the phloem of midvein vasculature of young leaves. Does not show polar expression pattern in leaf primordia.

The protein resides in the nucleus. In terms of biological role, seems to be associated with phloem cell differentiation. The protein is Protein YABBY 4 (YAB4) of Oryza sativa subsp. japonica (Rice).